Reading from the N-terminus, the 121-residue chain is C-type natriuretic peptide 4 (121 aa).

The N-terminal stretch at 1–22 is a signal peptide; sequence MNLSYLVACGLLVTFLSDKMDA. Residues 23–96 constitute a propeptide that is removed on maturation; sequence QPLTPAQQKS…SRRHKSGSKK (74 aa). The interval 80-109 is disordered; sequence LLNDQPASRRHKSGSKKGGSTSRSGCFGHK. A disulfide bond links Cys-105 and Cys-121.

It belongs to the natriuretic peptide family. In terms of tissue distribution, brain, spinal cord, spleen, heart and fin, and to a lower extent in gill and ovary.

It is found in the secreted. Functionally, exhibits natriuretic and vasodepressant activity. Has cGMP-stimulating activity. May help to regulate body fluid homeostasis in a variety of aquatic environments. This chain is C-type natriuretic peptide 4, found in Oryzias latipes (Japanese rice fish).